The chain runs to 144 residues: 3-hydroxyacyl-[acyl-carrier-protein] dehydratase FabZ (144 aa).

H48 is a catalytic residue.

This sequence belongs to the thioester dehydratase family. FabZ subfamily.

The protein resides in the cytoplasm. The enzyme catalyses a (3R)-hydroxyacyl-[ACP] = a (2E)-enoyl-[ACP] + H2O. Functionally, involved in unsaturated fatty acids biosynthesis. Catalyzes the dehydration of short chain beta-hydroxyacyl-ACPs and long chain saturated and unsaturated beta-hydroxyacyl-ACPs. This is 3-hydroxyacyl-[acyl-carrier-protein] dehydratase FabZ from Bacillus licheniformis (strain ATCC 14580 / DSM 13 / JCM 2505 / CCUG 7422 / NBRC 12200 / NCIMB 9375 / NCTC 10341 / NRRL NRS-1264 / Gibson 46).